Consider the following 1372-residue polypeptide: Collagen alpha-2(I) chain (1372 aa).

The N-terminal stretch at 1-22 (MLSFVDTRTLLLLAVTSCLATC) is a signal peptide. A Pyrrolidone carboxylic acid modification is found at Gln-23. Positions 23–85 (QSLQMGSVRK…PPGLTGNFAA (63 aa)) are cleaved as a propeptide — N-terminal propeptide. The tract at residues 28–1135 (GSVRKGPTGD…DQPRSQPSLR (1108 aa)) is disordered. Positions 59–77 (VGPPGPPGAPGPPGPPGPP) are enriched in pro residues. At Gln-86 the chain carries Pyrrolidone carboxylic acid. Lys-90 carries the post-translational modification Allysine. A compositionally biased stretch (low complexity) spans 95–146 (GPGPMGLMGPRGPPGAVGAPGPQGFQGPAGEPGEPGQTGPAGSRGPAGPPGK). A compositionally biased stretch (basic and acidic residues) spans 147 to 161 (AGEDGHPGKPGRPGE). The residue at position 183 (Lys-183) is a 5-hydroxylysine; alternate. Residue Lys-183 is glycosylated (O-linked (Gal...) hydroxylysine; alternate). Composition is skewed to low complexity over residues 231–260 (VGAP…SAGP), 285–299 (AGPR…LSGP), 306–327 (PGAN…AGAP), 336–348 (PGPV…TGPR), 390–416 (PGEP…LPGA), 476–495 (LPGI…RGEA), and 519–537 (PGLA…NGAQ). Over residues 544-553 (GVQGGKGEQG) the composition is skewed to gly residues. The span at 600-639 (PGESGAAGPSGPIGIRGPSGAPGPDGNKGEAGAVGAPGSA) shows a compositional bias: low complexity. The segment covering 640 to 649 (GASGPGGLPG) has biased composition (gly residues). Composition is skewed to low complexity over residues 674–716 (NPGR…PRGS) and 725–743 (PAGP…QPGA). Over residues 744-753 (KGEKGTKGPK) the composition is skewed to basic and acidic residues. Residues 755-771 (ENGIVGPTGPVGAAGPS) show a composition bias toward low complexity. A compositionally biased stretch (gly residues) spans 781–790 (GSRGDGGPPG). Residues 783–785 (RGD) carry the Cell attachment site motif. The span at 792–801 (TGFPGAAGRT) shows a compositional bias: low complexity. Positions 828–830 (RGD) match the Cell attachment site motif. Composition is skewed to low complexity over residues 855–882 (SGEP…LGLP), 891–927 (PGIA…NGAP), 957–978 (PGNI…VGPA), and 987–1007 (PGPA…PSGP). The short motif at 1011–1013 (RGD) is the Cell attachment site element. Residues 1011 to 1022 (RGDKGEPGDKGA) show a composition bias toward basic and acidic residues. Residues 1095–1107 (AGPPGPPGPPGPP) show a composition bias toward pro residues. The segment covering 1108–1120 (GVSGGGYDFGFEG) has biased composition (gly residues). Positions 1126-1372 (DQPRSQPSLR…RVEVGPVCFK (247 aa)) are cleaved as a propeptide — C-terminal propeptide. Residues 1139–1372 (YEVDATLKSL…RVEVGPVCFK (234 aa)) form the Fibrillar collagen NC1 domain. Cystine bridges form between Cys-1169–Cys-1201, Cys-1209–Cys-1370, and Cys-1278–Cys-1323. Ca(2+)-binding residues include Asp-1187, Asn-1189, Gln-1190, Cys-1192, and Asp-1195. Residue Asn-1273 is glycosylated (N-linked (GlcNAc...) asparagine).

Belongs to the fibrillar collagen family. Trimers of one alpha 2(I) and two alpha 1(I) chains. Interacts (via C-terminus) with TMEM131 (via PapD-L domain); the interaction is direct and is involved in assembly and TRAPPIII ER-to-Golgi transport complex-dependent secretion of collagen. Proline residues at the third position of the tripeptide repeating unit (G-X-P) are hydroxylated in some or all of the chains. Proline residues at the second position of the tripeptide repeating unit (G-P-X) are hydroxylated in some of the chains. In terms of tissue distribution, forms the fibrils of tendon, ligaments and bones. In bones the fibrils are mineralized with calcium hydroxyapatite. Expressed in flagella of epididymal sperm.

The protein resides in the secreted. The protein localises to the extracellular space. It localises to the extracellular matrix. Functionally, type I collagen is a member of group I collagen (fibrillar forming collagen). The polypeptide is Collagen alpha-2(I) chain (Col1a2) (Rattus norvegicus (Rat)).